The primary structure comprises 595 residues: Beta-(1--&gt;2)glucan export ATP-binding/permease protein NdvA (595 aa).

The ABC transmembrane type-1 domain maps to 21–301 (SLLICSANVM…MSNFINLTIS (281 aa)). A run of 5 helical transmembrane segments spans residues 22 to 42 (LLICSANVMLAIITIAEPILF), 55 to 75 (IIPTLTIWVCFGISHILAYVL), 129 to 149 (IWLDFMRQHLSTLVALFVLIP), 152 to 172 (FNMNWRLSIVLVVLAIIYVLI), and 248 to 268 (MASTISIVCVLLLGAFFVAKG). One can recognise an ABC transporter domain in the interval 335–569 (IQFHHVTYKF…GGRFYKLLKA (235 aa)). 368 to 375 (GPTGAGKT) contributes to the ATP binding site.

The protein belongs to the ABC transporter superfamily. Beta-(1--&gt;2)glucan exporter (TC 3.A.1.108.1) family. As to quaternary structure, homodimer.

It is found in the cell inner membrane. It catalyses the reaction [(1-&gt;2)-beta-D-glucosyl](n)(in) + ATP + H2O = [(1-&gt;2)-beta-D-glucosyl](n)(out) + ADP + phosphate + H(+). Functionally, involved in beta-(1--&gt;2)glucan export. Transmembrane domains (TMD) form a pore in the inner membrane and the ATP-binding domain (NBD) is responsible for energy generation. This chain is Beta-(1--&gt;2)glucan export ATP-binding/permease protein NdvA, found in Bartonella henselae (strain ATCC 49882 / DSM 28221 / CCUG 30454 / Houston 1) (Rochalimaea henselae).